Consider the following 551-residue polypeptide: GMP synthase [glutamine-hydrolyzing] (551 aa).

The disordered stretch occupies residues M1–A28. Residues V19 to A28 show a composition bias toward polar residues. Residues M37–E227 enclose the Glutamine amidotransferase type-1 domain. The active-site Nucleophile is C114. Residues H201 and E203 contribute to the active site. The 199-residue stretch at W228 to R426 folds into the GMPS ATP-PPase domain. S255–S261 serves as a coordination point for ATP.

Homodimer.

It carries out the reaction XMP + L-glutamine + ATP + H2O = GMP + L-glutamate + AMP + diphosphate + 2 H(+). Its pathway is purine metabolism; GMP biosynthesis; GMP from XMP (L-Gln route): step 1/1. Catalyzes the synthesis of GMP from XMP. This chain is GMP synthase [glutamine-hydrolyzing], found in Gloeobacter violaceus (strain ATCC 29082 / PCC 7421).